We begin with the raw amino-acid sequence, 339 residues long: UDP-N-acetylenolpyruvoylglucosamine reductase (339 aa).

The FAD-binding PCMH-type domain occupies 18–189; that stretch reads GIDVRARLLA…LRVRLRLTRR (172 aa). Residue arginine 166 is part of the active site. The active-site Proton donor is the serine 239. The active site involves glutamate 335.

Belongs to the MurB family. FAD serves as cofactor.

It is found in the cytoplasm. The catalysed reaction is UDP-N-acetyl-alpha-D-muramate + NADP(+) = UDP-N-acetyl-3-O-(1-carboxyvinyl)-alpha-D-glucosamine + NADPH + H(+). It functions in the pathway cell wall biogenesis; peptidoglycan biosynthesis. In terms of biological role, cell wall formation. In Pseudomonas aeruginosa (strain ATCC 15692 / DSM 22644 / CIP 104116 / JCM 14847 / LMG 12228 / 1C / PRS 101 / PAO1), this protein is UDP-N-acetylenolpyruvoylglucosamine reductase.